The following is a 269-amino-acid chain: L-cystine-binding protein TcyJ (269 aa).

A signal peptide spans M1–G20. Residue C21 is the site of N-palmitoyl cysteine attachment. A lipid anchor (S-diacylglycerol cysteine) is attached at C21.

The protein belongs to the bacterial solute-binding protein 3 family. As to quaternary structure, the complex is composed of two ATP-binding proteins (TcyN), two transmembrane proteins (TcyL and TcyM) and two solute-binding proteins (TcyJ and TcyK).

The protein resides in the cell membrane. Its function is as follows. Part of the ABC transporter complex TcyJKLMN involved in L-cystine import. Is also involved in cystathionine, djenkolate, and S-methylcysteine transport. The chain is L-cystine-binding protein TcyJ (tcyJ) from Bacillus subtilis (strain 168).